Reading from the N-terminus, the 142-residue chain is Anti-sigma F factor (142 aa).

The protein belongs to the anti-sigma-factor family.

The catalysed reaction is L-seryl-[protein] + ATP = O-phospho-L-seryl-[protein] + ADP + H(+). It catalyses the reaction L-threonyl-[protein] + ATP = O-phospho-L-threonyl-[protein] + ADP + H(+). Its function is as follows. Binds to sigma F and blocks its ability to form an RNA polymerase holoenzyme (E-sigma F). Phosphorylates SpoIIAA on a serine residue. This phosphorylation may enable SpoIIAA to act as an anti-anti-sigma factor that counteracts SpoIIAB and thus releases sigma F from inhibition. The polypeptide is Anti-sigma F factor (Clostridium kluyveri (strain NBRC 12016)).